A 207-amino-acid chain; its full sequence is NADH-quinone oxidoreductase subunit A (207 aa).

3 consecutive transmembrane segments (helical) span residues 6–26, 62–82, and 87–107; these read WSAIAFILAAIALVVFMLVVP, LVAIFFVIFDLEALYLYAYAV, and AGWLGFAAAAIFITILIIGLV.

It belongs to the complex I subunit 3 family. NDH-1 is composed of 14 different subunits. Subunits NuoA, H, J, K, L, M, N constitute the membrane sector of the complex.

The protein resides in the cell inner membrane. The enzyme catalyses a quinone + NADH + 5 H(+)(in) = a quinol + NAD(+) + 4 H(+)(out). NDH-1 shuttles electrons from NADH, via FMN and iron-sulfur (Fe-S) centers, to quinones in the respiratory chain. The immediate electron acceptor for the enzyme in this species is believed to be ubiquinone. Couples the redox reaction to proton translocation (for every two electrons transferred, four hydrogen ions are translocated across the cytoplasmic membrane), and thus conserves the redox energy in a proton gradient. The sequence is that of NADH-quinone oxidoreductase subunit A from Psychrobacter arcticus (strain DSM 17307 / VKM B-2377 / 273-4).